A 158-amino-acid chain; its full sequence is uncharacterized protein (158 aa).

The region spanning 12 to 73 (LDEIDRAILR…LINPFKAGYE (62 aa)) is the HTH asnC-type domain. Positions 31–50 (YSEISRRINVPESTVRARVN) form a DNA-binding region, H-T-H motif.

This is an uncharacterized protein from Pyrococcus abyssi (strain GE5 / Orsay).